The sequence spans 450 residues: MDTIVAVATPPGKGAIAILRLSGPDSWKIVQKHLRTRSEIVPRKAIHGWIHENGEDVDEVVVIFYKSPKSYTGEDMVEVMCHGGPLVVKKLLDLFLKSGARMAEPGEFTKRAFLNGKMDLTSAEAVRDLIEAKSETSLKLSLRNLKGGLKDFVESLRRELIEVLAEIRVELDYPDEIETNTGEVVTRLERIKEKLTKELKKADAGILLNRGFRMVIVGKPNVGKSTLLNRLLNEDRAIVTDIPGTTRDVISEEIVIRGILFRIVDTAGVRSETNDLVERLGIERTLQEIEKADIVLFVLDASSPLDEEDRKILERIKNKRYLVVINKVDVVEKINEEEIKNKLGTDRHMVKISALKGEGLEKLEEAIYRETQEIFERGSDSLITNLRQKQLLENVKGHLEDAIKSLKEGMPVDMASIDLERALSLLDEVTGRSFREDLLDTIFSNFCVGK.

The (6S)-5-formyl-5,6,7,8-tetrahydrofolate site is built by R20, E78, and K117. The region spanning 211–372 (GFRMVIVGKP…LEEAIYRETQ (162 aa)) is the TrmE-type G domain. N221 is a binding site for K(+). Residues 221–226 (NVGKST), 240–246 (TDIPGTT), and 265–268 (DTAG) contribute to the GTP site. S225 lines the Mg(2+) pocket. K(+) is bound by residues T240, I242, and T245. Residue T246 participates in Mg(2+) binding. K450 contributes to the (6S)-5-formyl-5,6,7,8-tetrahydrofolate binding site.

This sequence belongs to the TRAFAC class TrmE-Era-EngA-EngB-Septin-like GTPase superfamily. TrmE GTPase family. In terms of assembly, homodimer. Heterotetramer of two MnmE and two MnmG subunits. Requires K(+) as cofactor.

Its subcellular location is the cytoplasm. Its function is as follows. Exhibits a very high intrinsic GTPase hydrolysis rate. Involved in the addition of a carboxymethylaminomethyl (cmnm) group at the wobble position (U34) of certain tRNAs, forming tRNA-cmnm(5)s(2)U34. This chain is tRNA modification GTPase MnmE, found in Thermotoga petrophila (strain ATCC BAA-488 / DSM 13995 / JCM 10881 / RKU-1).